We begin with the raw amino-acid sequence, 142 residues long: Hemoglobin subunit beta-C (142 aa).

In terms of domain architecture, Globin spans 2 to 142 (PNKALITGFW…VASALAHRYH (141 aa)). Residues His59 and His88 each coordinate heme b.

This sequence belongs to the globin family. In terms of assembly, heterotetramer of two alpha chains and two beta chains. As to expression, red blood cells.

Involved in oxygen transport from the lung to the various peripheral tissues. In Ovis aries (Sheep), this protein is Hemoglobin subunit beta-C (HBBC).